The chain runs to 465 residues: E3 ubiquitin-protein ligase parkin (465 aa).

The Ubiquitin-like domain maps to 1–76 (MIVFVRFNSS…VHIVQRPQRK (76 aa)). Ser65 is modified (phosphoserine; by PINK1). A disordered region spans residues 71-96 (QRPQRKSHETNASGGDKPQSTPEGSI). Residues 77 to 237 (SHETNASGGD…LITNNSRSIP (161 aa)) are necessary for PINK1-dependent localization to mitochondria. Thr80 carries the post-translational modification Phosphothreonine. Polar residues predominate over residues 80-93 (TNASGGDKPQSTPE). Residues 141 to 225 (PTYHSFFVYC…PTSDKDTSVA (85 aa)) form an RING-type 0; atypical zinc finger. Thr175 is modified (phosphothreonine; by PINK1). Residues 204–238 (TRAEFFFKCGAHPTSDKDTSVALNLITNNSRSIPC) are SYT11 binding 1. Phosphothreonine is present on Thr217. Residues 234-465 (RSIPCIACTD…ACMGDHWFDV (232 aa)) are TRIAD supradomain. Zn(2+)-binding residues include Cys238, Cys241, Cys253, His257, Cys260, Cys263, Cys289, Cys293, Cys332, and Cys337. The RING-type 1 zinc finger occupies 238 to 293 (CIACTDVRNPVLVFQCNHRHVICLDCFHLYCVTRLNDRQFVHDAQLGYSLPCVAGC). The segment at 257 to 293 (HVICLDCFHLYCVTRLNDRQFVHDAQLGYSLPCVAGC) is SYT11 binding 2. The IBR-type zinc-finger motif lies at 313–377 (NRYQQYGAEE…CKEAYHEGEC (65 aa)). Lys349 participates in a covalent cross-link: Glycyl lysine isopeptide (Lys-Gly) (interchain with G-Cter in ISG15). Cys352, Cys360, Cys365, and Cys368 together coordinate Zn(2+). Lys369 is covalently cross-linked (Glycyl lysine isopeptide (Lys-Gly) (interchain with G-Cter in ISG15)). 2 residues coordinate Zn(2+): His373 and Cys377. Positions 378–410 (DSMFEASGATSQAYRVDQRAAEQARWEEASKET) are REP. Residues Cys418 and Cys421 each coordinate Zn(2+). The RING-type 2; atypical zinc-finger motif lies at 418–449 (CPRCNVPIEKNGGCMHMKCPQPQCKLEWCWNC). The active site involves Cys431. Zn(2+) is bound by residues Cys436, Cys441, Cys446, Cys449, Cys457, and His461.

It belongs to the RBR family. Parkin subfamily. As to quaternary structure, forms an E3 ubiquitin ligase complex with UBE2L3 or UBE2L6. Mediates 'Lys-63'-linked polyubiquitination by associating with UBE2V1. Part of a SCF-like complex, consisting of PRKN, CUL1 and FBXW7. Interacts with SNCAIP. Binds to the C2A and C2B domains of SYT11. Interacts and regulates the turnover of SEPTIN5. Part of a complex, including STUB1, HSP70 and GPR37. The amount of STUB1 in the complex increases during ER stress. STUB1 promotes the dissociation of HSP70 from PRKN and GPR37, thus facilitating PRKN-mediated GPR37 ubiquitination. HSP70 transiently associates with unfolded GPR37 and inhibits the E3 activity of PRKN, whereas, STUB1 enhances the E3 activity of PRKN through promotion of dissociation of HSP70 from PRKN-GPR37 complexes. Interacts with PSMD4 and PACRG. Interacts with LRRK2. Interacts with RANBP2. Interacts with SUMO1 but not SUMO2, which promotes nuclear localization and autoubiquitination. Interacts (via first RING-type domain) with AIMP2 (via N-terminus). Interacts with PSMA7 and RNF41. Interacts with PINK1. Forms a complex with PINK1 and PARK7. Interacts with CHPF, the interaction with isoform 2 may facilitate PRKN transport into the mitochondria. Interacts with MFN2 (phosphorylated), promotes PRKN localization in dysfunctional depolarized mitochondria. Interacts with FBXO7; this promotes translocation to dysfunctional depolarized mitochondria. Interacts with ZNF746. Interacts with heat shock protein 70 family members, including HSPA1L, HSPA1A and HSPA8; interaction HSPA1L promotes translocation to damaged mitochondria. Interacts with BAG4 and, to a lesser extent, BAG5; interaction with BAG4 inhibits translocation to damaged mitochondria. Forms a complex with PRKN and PARK7. Interacts with AMBRA1. In terms of processing, auto-ubiquitinates in an E2-dependent manner leading to its own degradation. Also polyubiquitinated by RNF41 for proteasomal degradation. Post-translationally, S-nitrosylated. Phosphorylated. Activation requires phosphorylation at Ser-65 by PINK1 and binding to PINK1 phosphorylated ubiquitin. Phosphorylation at Thr-175 by PINK1 and at Thr-217 is important for mitochondrial localization. In terms of tissue distribution, largely confined to neuronal elements, including fibers and neuropil. Highly expressed at the forebrain level, in pyramidal cells of layer V, in various cortical regions and cerebellum. Expressed in the nucleus of diagonal band of Broca, nucleus basalis, bed nucleus of the stria terminalis, and olfactory tubercle. Moderate expression is seen in most neurons of the subthalamic nucleus, heart, skeletal muscle and testis. Moderate expression was found in frontal cortex, parietal cortex, cerebellum, heart, skeletal muscle and testis.

Its subcellular location is the cytoplasm. The protein localises to the cytosol. It localises to the nucleus. The protein resides in the endoplasmic reticulum. It is found in the mitochondrion. Its subcellular location is the mitochondrion outer membrane. The protein localises to the cell projection. It localises to the neuron projection. The protein resides in the postsynaptic density. It is found in the presynapse. It catalyses the reaction [E2 ubiquitin-conjugating enzyme]-S-ubiquitinyl-L-cysteine + [acceptor protein]-L-lysine = [E2 ubiquitin-conjugating enzyme]-L-cysteine + [acceptor protein]-N(6)-ubiquitinyl-L-lysine.. The protein operates within protein modification; protein ubiquitination. With respect to regulation, in the autoinhibited state the side chain of Phe-463 inserts into a hydrophobic groove in RING-0, occluding the ubiquitin acceptor site Cys-431, whereas the REP repressor element binds RING-1 and blocks its E2-binding site. Activation of PRKN requires 2 steps: (1) phosphorylation at Ser-65 by PINK1 and (2) binding to phosphorylated ubiquitin, leading to unlock repression of the catalytic Cys-431 by the RING-0 region via an allosteric mechanism and converting PRKN to its fully-active form. According to another report, phosphorylation at Ser-65 by PINK1 is not essential for activation and only binding to phosphorylated ubiquitin is essential to unlock repression. In addition, ISG15 conjugation positively regulates its ubiquitin E3 ligase activity by suppressing the intramolecular interaction that maintains its autoinhibited conformation. Functionally, functions within a multiprotein E3 ubiquitin ligase complex, catalyzing the covalent attachment of ubiquitin moieties onto substrate proteins. Substrates include SYT11 and VDAC1. Other substrates are BCL2, CCNE1, GPR37, RHOT1/MIRO1, MFN1, MFN2, STUB1, SNCAIP, SEPTIN5, TOMM20, USP30, ZNF746, MIRO1 and AIMP2. Mediates monoubiquitination as well as 'Lys-6', 'Lys-11', 'Lys-48'-linked and 'Lys-63'-linked polyubiquitination of substrates depending on the context. Participates in the removal and/or detoxification of abnormally folded or damaged protein by mediating 'Lys-63'-linked polyubiquitination of misfolded proteins such as PARK7: 'Lys-63'-linked polyubiquitinated misfolded proteins are then recognized by HDAC6, leading to their recruitment to aggresomes, followed by degradation. Mediates 'Lys-63'-linked polyubiquitination of a 22 kDa O-linked glycosylated isoform of SNCAIP, possibly playing a role in Lewy-body formation. Mediates monoubiquitination of BCL2, thereby acting as a positive regulator of autophagy. Protects against mitochondrial dysfunction during cellular stress, by acting downstream of PINK1 to coordinate mitochondrial quality control mechanisms that remove and replace dysfunctional mitochondrial components. Depending on the severity of mitochondrial damage and/or dysfunction, activity ranges from preventing apoptosis and stimulating mitochondrial biogenesis to regulating mitochondrial dynamics and eliminating severely damaged mitochondria via mitophagy. Activation and recruitment onto the outer membrane of damaged/dysfunctional mitochondria (OMM) requires PINK1-mediated phosphorylation of both PRKN and ubiquitin. After mitochondrial damage, functions with PINK1 to mediate the decision between mitophagy or preventing apoptosis by inducing either the poly- or monoubiquitination of VDAC1, respectively; polyubiquitination of VDAC1 promotes mitophagy, while monoubiquitination of VDAC1 decreases mitochondrial calcium influx which ultimately inhibits apoptosis. When cellular stress results in irreversible mitochondrial damage, promotes the autophagic degradation of dysfunctional depolarized mitochondria (mitophagy) by promoting the ubiquitination of mitochondrial proteins such as TOMM20, RHOT1/MIRO1, MFN1 and USP30. Preferentially assembles 'Lys-6'-, 'Lys-11'- and 'Lys-63'-linked polyubiquitin chains, leading to mitophagy. The PINK1-PRKN pathway also promotes fission of damaged mitochondria by PINK1-mediated phosphorylation which promotes the PRKN-dependent degradation of mitochondrial proteins involved in fission such as MFN2. This prevents the refusion of unhealthy mitochondria with the mitochondrial network or initiates mitochondrial fragmentation facilitating their later engulfment by autophagosomes. Regulates motility of damaged mitochondria via the ubiquitination and subsequent degradation of MIRO1 and MIRO2; in motor neurons, this likely inhibits mitochondrial intracellular anterograde transport along the axons which probably increases the chance of the mitochondria undergoing mitophagy in the soma. Involved in mitochondrial biogenesis via the 'Lys-48'-linked polyubiquitination of transcriptional repressor ZNF746/PARIS which leads to its subsequent proteasomal degradation and allows activation of the transcription factor PPARGC1A. Limits the production of reactive oxygen species (ROS). Regulates cyclin-E during neuronal apoptosis. In collaboration with CHPF isoform 2, may enhance cell viability and protect cells from oxidative stress. Independently of its ubiquitin ligase activity, protects from apoptosis by the transcriptional repression of p53/TP53. May protect neurons against alpha synuclein toxicity, proteasomal dysfunction, GPR37 accumulation, and kainate-induced excitotoxicity. May play a role in controlling neurotransmitter trafficking at the presynaptic terminal and in calcium-dependent exocytosis. May represent a tumor suppressor gene. This chain is E3 ubiquitin-protein ligase parkin, found in Rattus norvegicus (Rat).